We begin with the raw amino-acid sequence, 250 residues long: Triosephosphate isomerase (250 aa).

9-11 contributes to the substrate binding site; the sequence is NWK. Residue His-94 is the Electrophile of the active site. The Proton acceptor role is filled by Glu-166. Residues Gly-172, Ser-212, and 233–234 contribute to the substrate site; that span reads GG.

Belongs to the triosephosphate isomerase family. Homodimer.

It is found in the cytoplasm. It carries out the reaction D-glyceraldehyde 3-phosphate = dihydroxyacetone phosphate. The protein operates within carbohydrate biosynthesis; gluconeogenesis. It functions in the pathway carbohydrate degradation; glycolysis; D-glyceraldehyde 3-phosphate from glycerone phosphate: step 1/1. Involved in the gluconeogenesis. Catalyzes stereospecifically the conversion of dihydroxyacetone phosphate (DHAP) to D-glyceraldehyde-3-phosphate (G3P). The chain is Triosephosphate isomerase from Clostridium novyi (strain NT).